We begin with the raw amino-acid sequence, 299 residues long: Delta-9 desaturase-like 2 protein (299 aa).

The chain crosses the membrane as a helical span at residues 55-75; that stretch reads WEAFRFGIILAILTNLCITFS. A Histidine box-1 motif is present at residues 77 to 82; sequence HRNLTH. The short motif at 114-118 is the Histidine box-2 element; it reads HRFHH. Residues 174–194 form a helical membrane-spanning segment; sequence LVLHILAFWTLIYLWGGLPYL. A Histidine box-3 motif is present at residues 246–250; that stretch reads HNNHH. Residues 262 to 282 form a helical membrane-spanning segment; that stretch reads WYQLDITWYLIWFFQALGLAT.

Belongs to the fatty acid desaturase type 1 family. Fe cation serves as cofactor.

It localises to the endoplasmic reticulum membrane. It functions in the pathway lipid metabolism; polyunsaturated fatty acid biosynthesis. The chain is Delta-9 desaturase-like 2 protein from Arabidopsis thaliana (Mouse-ear cress).